Consider the following 218-residue polypeptide: Putative inactive cathepsin L-like protein CTSL3P (218 aa).

Disordered stretches follow at residues 144–173 and 195–218; these read GDWKVQGHRGASGESLLASGESQQSPEVAQ and GDEDHDEDKWPHDMRNHLAGEAQV. Residues 201–212 show a composition bias toward basic and acidic residues; that stretch reads EDKWPHDMRNHL.

The protein belongs to the peptidase C1 family.

The sequence is that of Putative inactive cathepsin L-like protein CTSL3P (CTSL3P) from Homo sapiens (Human).